A 220-amino-acid polypeptide reads, in one-letter code: 1-Cys peroxiredoxin B (220 aa).

Positions 4–165 (LTLGDVVPDL…VLRATDALLT (162 aa)) constitute a Thioredoxin domain. Residue cysteine 46 is the Cysteine sulfenic acid (-SOH) intermediate of the active site. The short motif at 195-218 (KARFPAGFETAQLPSNKCYLRFTQ) is the Bipartite nuclear localization signal element.

It belongs to the peroxiredoxin family. Prx6 subfamily.

The protein localises to the nucleus. It localises to the cytoplasm. It carries out the reaction a hydroperoxide + [thioredoxin]-dithiol = an alcohol + [thioredoxin]-disulfide + H2O. Its function is as follows. Thiol-specific peroxidase that catalyzes the reduction of hydrogen peroxide and organic hydroperoxides to water and alcohols, respectively. Seems to contribute to the inhibition of germination during stress. The sequence is that of 1-Cys peroxiredoxin B from Oryza sativa subsp. indica (Rice).